The chain runs to 249 residues: O-methyltransferase adaD (249 aa).

Residues 1 to 15 are compositionally biased toward low complexity; that stretch reads MSSVTLTTTTTTTST. A disordered region spans residues 1–26; the sequence is MSSVTLTTTTTTTSTPPKPTPKDEPQ.

It belongs to the methyltransferase superfamily.

The catalysed reaction is 2-acetyl-3,4a,8,10,11,12a-hexahydroxy-1,4,4a,5,12,12a-hexahydrotetracene-1,12-dione + S-adenosyl-L-methionine = TAN-1612 + S-adenosyl-L-homocysteine + H(+). Its pathway is secondary metabolite biosynthesis. In terms of biological role, O-methyltransferase; part of the gene cluster that mediates the biosynthesis of the linear tetracyclic TAN-1612 neuropeptide Y receptor antagonist. The decaketide backbone of TAN-1612 is synthesized by the non-reducing polyketide synthase adaA via condensation of one acetyl-CoA starter unit with 9 malonyl-CoA units. The FAD-dependent monooxygenase adaC then performs hydroxylation at C2 while the polaketide chain is still attached to the NRPKS adaA. The alpha-hydroxylation step at C2 appears to be crucial for the following C18-C1 Claisen cyclization and release of the C9-hydroxyl version of TAN-1612 from the NRPKS adaA, two steps performed by the lactamase-like protein adaB. Finally, the O-methyltransferase adaD performs the C9 O-methylation to complete the biosynthesis of TAN-1612. This chain is O-methyltransferase adaD, found in Aspergillus niger.